A 547-amino-acid chain; its full sequence is MDIFKVLSRGATIQRNGKHRKDLTLLNHAAPKDTQDNVDIEVARETDFFKTKTDTYSKKRVAEEAELDNEEEEEAPPPIISTPEEAVVFRNKHKINITGEDSPLPIGSFEDLITRFNLHPYLLANLKKNKYTDPTPIQCESIPTMLNGRDLIACAPTGSGKTMAYSIPMVEMLGKKKGSKDAKKGIKALVVAPTKELASQIFNAVFSLCVGVGKKKDELKPCLLDKSTADKLRNGKVSSQKYDICITTPLRLVSALNDGSLDLGSLDLVIFDEADKLFEKGFATQVDDILAACPSGIQKTLFSATIPASVEQLANSIMSTDPLRIIIGNKQAAAQTVEQKLVYAGNEEGKLVAIRQMAREGQLVAPVIIFLQSIDRAKALFKELVFDGINVDQIHGDMTAAKRASVIDRFRNGEVWVLICTDVLARGIDFRGINLVINYDVPQSAQSYVHRIGRTGRAGRLGKAVTFFTKEDATNVKVVVNVMKQSGQEVPDWLNNLAPLTQKERDNIKNRPIKRKKISTQHALANNKKKRAKQQMKGLKKMKKDDE.

The short motif at 111–139 (DLITRFNLHPYLLANLKKNKYTDPTPIQC) is the Q motif element. The Helicase ATP-binding domain occupies 142 to 324 (IPTMLNGRDL…NSIMSTDPLR (183 aa)). Position 155–162 (155–162 (APTGSGKT)) interacts with ATP. The DEAD box motif lies at 272-275 (DEAD). The Helicase C-terminal domain occupies 336-498 (TVEQKLVYAG…EVPDWLNNLA (163 aa)). Positions 511–547 (RPIKRKKISTQHALANNKKKRAKQQMKGLKKMKKDDE) are disordered. Basic residues predominate over residues 527–547 (NKKKRAKQQMKGLKKMKKDDE).

The protein belongs to the DEAD box helicase family. DDX52/ROK1 subfamily. As to quaternary structure, interacts with the U3 snoRNA and is associated with the 90S and 40S pre-ribosomes.

Its subcellular location is the nucleus. The protein resides in the nucleolus. The catalysed reaction is ATP + H2O = ADP + phosphate + H(+). In terms of biological role, ATP-dependent RNA helicase involved in 40S ribosomal subunit biogenesis. Required for the processing and cleavage of 35S pre-rRNA at sites A0, A1, and A2, leading to mature 18S rRNA. This Yarrowia lipolytica (strain CLIB 122 / E 150) (Yeast) protein is ATP-dependent RNA helicase ROK1 (ROK1).